The following is a 109-amino-acid chain: MKGVQTLKTKREFDYVYKRGIAFHSPYFVLFYIPDKDMRIGFVASKKVGKAVQRNRAKRVLKALFIQYFDQLPIGRYVFVAKPKLLGADFKRIDQEMTKILERIKRRKW.

Belongs to the RnpA family. Consists of a catalytic RNA component (M1 or rnpB) and a protein subunit.

The catalysed reaction is Endonucleolytic cleavage of RNA, removing 5'-extranucleotides from tRNA precursor.. In terms of biological role, RNaseP catalyzes the removal of the 5'-leader sequence from pre-tRNA to produce the mature 5'-terminus. It can also cleave other RNA substrates such as 4.5S RNA. The protein component plays an auxiliary but essential role in vivo by binding to the 5'-leader sequence and broadening the substrate specificity of the ribozyme. This Nitratiruptor sp. (strain SB155-2) protein is Ribonuclease P protein component.